The following is a 549-amino-acid chain: Plant intracellular Ras-group-related LRR protein 4 (549 aa).

A compositionally biased stretch (low complexity) spans 119–140 (SPSSNGSVSSRPPLPPATTTAA). Positions 119 to 167 (SPSSNGSVSSRPPLPPATTTAARSDSQSSLNFSERAPVRPKDMVSRDDS) are disordered. A compositionally biased stretch (polar residues) spans 141-150 (RSDSQSSLNF). Basic and acidic residues predominate over residues 154-167 (APVRPKDMVSRDDS). S167 is modified (phosphoserine). LRR repeat units lie at residues 245–268 (LSSL…IGGL), 269–291 (SSLT…IGEL), 293–313 (NLVY…AFSR), 314–337 (LVRL…IGSL), 339–360 (SLKK…IGGC), 362–383 (SLIE…IGKI), 384–406 (TTLE…MSSL), 407–430 (ASLK…CFAT), 432–454 (LVKL…IGNL), 455–476 (EMLE…SFKM), and 478–500 (TKLR…IAEK). The GVYW; degenerate signature appears at 501-508 (GPQAVVQY).

The protein belongs to the SHOC2 family. As to expression, widely expressed.

Functionally, leucine-rich repeat protein that likely mediates protein interactions, possibly in the context of signal transduction. This Arabidopsis thaliana (Mouse-ear cress) protein is Plant intracellular Ras-group-related LRR protein 4 (PIRL4).